A 306-amino-acid chain; its full sequence is Low-density lipoprotein receptor class A domain-containing protein 4 (306 aa).

At 1-64 (MPEAGFQATN…PPGIFNSELE (64 aa)) the chain is on the lumenal side. An LDL-receptor class A domain is found at 11–48 (AFTECKFTCTSGKCLYLGSLVCNQQNDCGDNSDEENCL). Intrachain disulfides connect Cys19/Cys38 and Cys32/Cys47. The chain crosses the membrane as a helical span at residues 65–85 (FAQILIIVVVVTVMVVVVVCL). The Cytoplasmic portion of the chain corresponds to 86-306 (LNHYKVSTRS…GKDRKPGDLV (221 aa)). The interval 100–127 (PNQSQRQEDGLQPEGSLWPSDSSVQRPG) is disordered. The PPxY motif 1 motif lies at 180–183 (PPPY). The SMAD interaction motif (SIM) signature appears at 208 to 211 (PPNR). The PPxY motif 2 motif lies at 252–255 (PPTY). The interval 268-306 (FHHQHSNTHRGSRPQFQPNNSEGTIVPIKGKDRKPGDLV) is disordered. Basic residues predominate over residues 269–279 (HHQHSNTHRGS). Positions 281 to 290 (PQFQPNNSEG) are enriched in polar residues. The segment covering 296-306 (KGKDRKPGDLV) has biased composition (basic and acidic residues).

It belongs to the PMEPA1 family. Interacts with PMEPA1. Interacts (via the SMAD interaction motif) with SMAD2 and SMAD3. Detected in all tissues tested.

The protein resides in the early endosome membrane. In terms of biological role, functions as a negative regulator of TGF-beta signaling and thereby probably plays a role in cell proliferation, differentiation, apoptosis, motility, extracellular matrix production and immunosuppression. In the canonical TGF-beta pathway, ZFYVE9/SARA recruits the intracellular signal transducer and transcriptional modulators SMAD2 and SMAD3 to the TGF-beta receptor. Phosphorylated by the receptor, SMAD2 and SMAD3 then form a heteromeric complex with SMAD4 that translocates to the nucleus to regulate transcription. Through interaction with SMAD2 and SMAD3, LDLRAD4 may compete with ZFYVE9 and SMAD4 and prevent propagation of the intracellular signal. The chain is Low-density lipoprotein receptor class A domain-containing protein 4 (Ldlrad4) from Mus musculus (Mouse).